A 511-amino-acid polypeptide reads, in one-letter code: Histidine ammonia-lyase (511 aa).

A cross-link (5-imidazolinone (Ala-Gly)) is located at residues 143–145 (ASG). Ser144 is subject to 2,3-didehydroalanine (Ser).

The protein belongs to the PAL/histidase family. Post-translationally, contains an active site 4-methylidene-imidazol-5-one (MIO), which is formed autocatalytically by cyclization and dehydration of residues Ala-Ser-Gly.

The protein resides in the cytoplasm. It catalyses the reaction L-histidine = trans-urocanate + NH4(+). Its pathway is amino-acid degradation; L-histidine degradation into L-glutamate; N-formimidoyl-L-glutamate from L-histidine: step 1/3. This chain is Histidine ammonia-lyase, found in Vibrio cholerae serotype O1 (strain ATCC 39315 / El Tor Inaba N16961).